A 1060-amino-acid polypeptide reads, in one-letter code: MAEAASGAGDVTLEGERGKRPPPEGEPAAPASGVLDKLFGKRLLQAGRYLVSHKAWMKTVPTEDCDVLMTFPDTTDDHTLLWLLNHIRVGIPELIVQVRHHRHTRAYAFFVTATYESLLRGADELGLRKAVKAEFGGGTRSFSCEEDFIYENVESELRFFTSQERQSIIRFWLQNLRAKQGEALHNVRFLEDQPIIPELAARGIIQQVFPVHEQRILNRLMKSWVQAVCENQPLDDICDYFGVKIAMYFAWLGFYTSAMVYPAVFGSVLYTFTEADQTSRDVSCVVFALFNVIWSTLFLEEWKRRGAELAYKWGTLDSPGEAVEEPRPQFRGIRRISPITRAEEFYYPPWKRLLFQLLVSLPLCLACLICVFILMLGCFQLQELVLSVKGLPRLVRFLPKVMLALLVSVSAEGYKKLAVWLNDMENYRLESTYERHLIIKVVLFQFVNSYLSLFYIGFYLKDMDRLKEMLATLLITRQLLQNVREVLQPHLYRRLGSGELGLRTILELARALLGLLNPLRPDPRRHLEAQADEGGAGSRRCLGGGCGAPEEENEEEEEAAVERRPAGEGGEVPEGPRGGKEEDEEEDDDEDEDEEYEGEEGSLLDCGLRLKKVSFAERGAGRRRPGPSPDGLLEEGSPTMVEKGLEPGVFTLAEEDDEPEGPPGSPGPEPQTVLLRRARGEGRDQGPDGDRDTETGSGDAAGRQKRHNRSSWIDPPEEEHSPQLTQAELESCMKKYEDTFQDYQEMFVQFGYVVLFSSAFPLAALCALVNNLIEIRSDAFKLCTGLQRPFGRRVESIGQWQKVMEAMGVLAIVVNCYLIGQCGQLQRLFPWLSPEAAIVSVVVLEHLALLVKYLIHVAIPDIPGWVAEEMAKLEYQRREAFKRHERQAQQRFQQQQRRRREEEERQRHAEQQARRERDTGGREEARAEAPGPDPVAERGAAKAKGSERPRRPGALLPPGPVLRLKQIIPLQTRPPAPTGCAPPPRSPADTRLPAFLSLRFLKAPERGPSPPRPGKLFAFSAREPSANGAPGGGARAHRSAGDEPAAAEPEPRPEDAGHRP.

Residues 1-32 form a disordered region; it reads MAEAASGAGDVTLEGERGKRPPPEGEPAAPAS. Ala-2 carries the post-translational modification N-acetylalanine. Topologically, residues 2-244 are cytoplasmic; sequence AEAASGAGDV…DDICDYFGVK (243 aa). The span at 14–23 shows a compositional bias: basic and acidic residues; the sequence is EGERGKRPPP. A helical membrane pass occupies residues 245–265; it reads IAMYFAWLGFYTSAMVYPAVF. Over 266 to 281 the chain is Extracellular; it reads GSVLYTFTEADQTSRD. The helical transmembrane segment at 282-302 threads the bilayer; sequence VSCVVFALFNVIWSTLFLEEW. At 303–356 the chain is on the cytoplasmic side; it reads KRRGAELAYKWGTLDSPGEAVEEPRPQFRGIRRISPITRAEEFYYPPWKRLLFQ. Ser-318 is subject to Phosphoserine. The chain crosses the membrane as a helical span at residues 357-377; sequence LLVSLPLCLACLICVFILMLG. Residues 378-400 lie on the Extracellular side of the membrane; that stretch reads CFQLQELVLSVKGLPRLVRFLPK. Residues 401–421 traverse the membrane as a helical segment; sequence VMLALLVSVSAEGYKKLAVWL. At 422–437 the chain is on the cytoplasmic side; the sequence is NDMENYRLESTYERHL. The helical transmembrane segment at 438-458 threads the bilayer; it reads IIKVVLFQFVNSYLSLFYIGF. Over 459–745 the chain is Extracellular; the sequence is YLKDMDRLKE…YEDTFQDYQE (287 aa). Disordered stretches follow at residues 529–605, 619–640, 653–672, and 680–723; these read AQAD…SLLD, GAGR…SPTM, AEED…EPQT, and GEGR…HSPQ. Residues 534–547 are compositionally biased toward gly residues; it reads GGAGSRRCLGGGCG. Composition is skewed to acidic residues over residues 549-559 and 581-602; these read PEEENEEEEEA and EEDE…EEGS. Ser-665 bears the Phosphoserine mark. The segment covering 680–694 has biased composition (basic and acidic residues); the sequence is GEGRDQGPDGDRDTE. A glycan (N-linked (GlcNAc...) asparagine) is linked at Asn-708. Residues 746–766 traverse the membrane as a helical segment; it reads MFVQFGYVVLFSSAFPLAALC. The Cytoplasmic segment spans residues 767–802; it reads ALVNNLIEIRSDAFKLCTGLQRPFGRRVESIGQWQK. The residue at position 796 (Ser-796) is a Phosphoserine. A helical transmembrane segment spans residues 803–823; sequence VMEAMGVLAIVVNCYLIGQCG. Residues 824–836 lie on the Extracellular side of the membrane; sequence QLQRLFPWLSPEA. A helical transmembrane segment spans residues 837–857; sequence AIVSVVVLEHLALLVKYLIHV. Residues 858 to 1060 are Cytoplasmic-facing; the sequence is AIPDIPGWVA…PRPEDAGHRP (203 aa). Residues 884-1060 are disordered; that stretch reads HERQAQQRFQ…PRPEDAGHRP (177 aa). Basic and acidic residues-rich tracts occupy residues 899-927 and 935-950; these read RREE…EARA and VAER…ERPR. A compositionally biased stretch (pro residues) spans 972–986; the sequence is TRPPAPTGCAPPPRS. Asymmetric dimethylarginine; alternate is present on Arg-991. Arg-991 is modified (omega-N-methylarginine; alternate). Omega-N-methylarginine is present on Arg-999. Basic and acidic residues predominate over residues 1049–1060; it reads PEPRPEDAGHRP.

It belongs to the anoctamin family. Predominant expression seen in epithelial tissues.

It localises to the cell membrane. Its function is as follows. Does not exhibit calcium-activated chloride channel (CaCC) activity. The polypeptide is Anoctamin-8 (Ano8) (Mus musculus (Mouse)).